Consider the following 250-residue polypeptide: UPF0736 protein YjbA (250 aa).

This sequence belongs to the UPF0736 family.

The protein is UPF0736 protein YjbA (yjbA) of Bacillus subtilis (strain 168).